We begin with the raw amino-acid sequence, 1070 residues long: DNA-directed RNA polymerase subunit beta (1070 aa).

The protein belongs to the RNA polymerase beta chain family. In plastids the minimal PEP RNA polymerase catalytic core is composed of four subunits: alpha, beta, beta', and beta''. When a (nuclear-encoded) sigma factor is associated with the core the holoenzyme is formed, which can initiate transcription.

The protein localises to the plastid. The enzyme catalyses RNA(n) + a ribonucleoside 5'-triphosphate = RNA(n+1) + diphosphate. In terms of biological role, DNA-dependent RNA polymerase catalyzes the transcription of DNA into RNA using the four ribonucleoside triphosphates as substrates. This is DNA-directed RNA polymerase subunit beta from Cuscuta exaltata (Tall dodder).